Here is a 370-residue protein sequence, read N- to C-terminus: METTEPGQADGEERMMDLRPRTRSNPEGAEDRRSSTGSLNSSLPSAPQPAVGSRVEGEGEAASSDSPPVSATAIAATASVPVAAVGNTTTTNTASLPAMSPAVKERPKPSQPTMPTQIPPSAELHLRAPRVNCPEKVIICLDLSEEMSLQKLESINGSKTNALNISQKMIEMFVRTKHKIDKRHEFALVVVNDDAMWLSGFTSDPRELCSCLYDLETNVCESFNLEDLFNVILQKIELPQMENIQTIPPPFVVRTLLVFSRHAGMLQFNPSDAVKKMLQSPYFFFDVVFLHNGTEEQTEDTSWKDVYASFCELDTKGMCYRFEVSLCGPAIELHNCMAKLLCHPLQRPFQSHASYSLLEDEDTLENEATV.

Disordered regions lie at residues 1-69 (METT…SPPV) and 90-126 (TTNTASLPAMSPAVKERPKPSQPTMPTQIPPSAELHL). A compositionally biased stretch (basic and acidic residues) spans 11 to 20 (GEERMMDLRP). Residues 35–45 (STGSLNSSLPS) are compositionally biased toward low complexity. A VWFA-like region spans residues 137–340 (VIICLDLSEE…IELHNCMAKL (204 aa)).

It belongs to the BABAM1 family. In terms of assembly, component of the ARISC complex, at least composed of uimc1/rap80, abraxas1, brcc3/brcc36, babam2 and babam1/nba1. Component of the BRCA1-A complex, at least composed of bard1, uimc1/rap80, abraxas1, brcc3/brcc36, babam2 and babam1/nba1. In the BRCA1-A complex, interacts directly with abraxas1 and babam2. Component of the BRISC complex, at least composed of abraxas2, brcc3/brcc36, babam2 and babam1/nba1.

It localises to the cytoplasm. Its subcellular location is the nucleus. In terms of biological role, component of the BRCA1-A complex, a complex that specifically recognizes 'Lys-63'-linked ubiquitinated histones H2A and H2AX at DNA lesion sites. The BRCA1-A complex also possesses deubiquitinase activity that specifically removes 'Lys-63'-linked ubiquitin on histones H2A and H2AX. In the BRCA1-A complex, it is required for the complex integrity and its localization at DNA double-strand breaks (DSBs). Component of the BRISC complex, a multiprotein complex that specifically cleaves 'Lys-63'-linked ubiquitin in various substrates. In these 2 complexes, it is probably required to maintain the stability of babam2 and help the 'Lys-63'-linked deubiquitinase activity mediated by brcc3/brcc36 component. The BRISC complex is required for normal mitotic spindle assembly and microtubule attachment to kinetochores via its role in deubiquitinating numa1. This is BRISC and BRCA1-A complex member 1 (babam1) from Danio rerio (Zebrafish).